Here is a 154-residue protein sequence, read N- to C-terminus: Superoxide dismutase [Cu-Zn] (154 aa).

The Cu cation site is built by histidine 47, histidine 49, and histidine 64. Residues cysteine 58 and cysteine 147 are joined by a disulfide bond. Histidine 64, histidine 72, histidine 81, and aspartate 84 together coordinate Zn(2+). Histidine 121 contributes to the Cu cation binding site. Position 144 (arginine 144) interacts with substrate.

Belongs to the Cu-Zn superoxide dismutase family. Homodimer. It depends on Cu cation as a cofactor. Requires Zn(2+) as cofactor.

Its subcellular location is the cytoplasm. It carries out the reaction 2 superoxide + 2 H(+) = H2O2 + O2. Functionally, destroys radicals which are normally produced within the cells and which are toxic to biological systems. This is Superoxide dismutase [Cu-Zn] (sodC) from Aspergillus fumigatus (strain ATCC MYA-4609 / CBS 101355 / FGSC A1100 / Af293) (Neosartorya fumigata).